We begin with the raw amino-acid sequence, 604 residues long: Elongation factor 4 (604 aa).

Residues 10–191 (KNIRNFSIIA…KIITTIPAPS (182 aa)) form the tr-type G domain. GTP is bound by residues 22-27 (DHGKST) and 138-141 (NKID).

It belongs to the TRAFAC class translation factor GTPase superfamily. Classic translation factor GTPase family. LepA subfamily.

It is found in the cell inner membrane. It carries out the reaction GTP + H2O = GDP + phosphate + H(+). Required for accurate and efficient protein synthesis under certain stress conditions. May act as a fidelity factor of the translation reaction, by catalyzing a one-codon backward translocation of tRNAs on improperly translocated ribosomes. Back-translocation proceeds from a post-translocation (POST) complex to a pre-translocation (PRE) complex, thus giving elongation factor G a second chance to translocate the tRNAs correctly. Binds to ribosomes in a GTP-dependent manner. This Helicobacter pylori (strain J99 / ATCC 700824) (Campylobacter pylori J99) protein is Elongation factor 4.